Reading from the N-terminus, the 1274-residue chain is DENN domain-containing protein 3 (1274 aa).

The tract at residues 65–108 (GQVPGASCALGKGRRRSFRKKREKPRMEPWKSHPGDSKGPDSED) is disordered. Residues 75-245 (GKGRRRSFRK…LIPSPPPGPL (171 aa)) enclose the uDENN domain. Positions 76–88 (KGRRRSFRKKREK) are enriched in basic residues. A compositionally biased stretch (basic and acidic residues) spans 89 to 105 (PRMEPWKSHPGDSKGPD). A cDENN domain is found at 268–400 (IVDLDLHLPL…PLLLAQTFIQ (133 aa)). The dDENN domain maps to 402 to 506 (VQSLQLHPDL…KARLNGRMDA (105 aa)). Residues 520 to 970 (RIDRMLISPR…KHKINPSAGE (451 aa)) form a linker region. Residues S554 and S572 each carry the phosphoserine; by ULK1 modification. Y940 is modified (phosphotyrosine). WD repeat units lie at residues 975–1013 (AIEV…VFDA), 1019–1055 (HQHC…IINV), 1059–1099 (SCNK…AWNV), 1103–1140 (RVIS…TPQG), 1146–1181 (LKHP…MWSL), 1186–1228 (QPPQ…IYVM), and 1234–1273 (TVEK…IWKV).

Forms oligomers. Interacts with 6 of the 7 known isoforms of 14-3-3 proteins.

It is found in the cytoplasm. Its function is as follows. Guanine nucleotide exchange factor (GEF) activating Rab12. Promotes the exchange of GDP to GTP, converting inactive GDP-bound Rab12 into its active GTP-bound form. Regulates autophagy in response to starvation through Rab12 activation. Starvation leads to ULK1/2-dependent phosphorylation of Ser-554 and Ser-572, which in turn allows recruitment of 14-3-3 adapter proteins and leads to up-regulation of GEF activity towards Rab12. Also plays a role in protein transport from recycling endosomes to lysosomes, regulating, for instance, the degradation of the transferrin receptor and of the amino acid transporter PAT4. Starvation also induces phosphorylation at Tyr-940, which leads to up-regulated GEF activity and initiates autophagy. This chain is DENN domain-containing protein 3 (Dennd3), found in Mus musculus (Mouse).